The primary structure comprises 102 residues: NADH-quinone oxidoreductase subunit K (102 aa).

The next 3 membrane-spanning stretches (helical) occupy residues 6–26, 30–50, and 62–82; these read LEHG…GLMV, ILFV…AFIV, and VMFI…LAIL.

Belongs to the complex I subunit 4L family. NDH-1 is composed of 13 different subunits. Subunits NuoA, H, J, K, L, M, N constitute the membrane sector of the complex.

The protein localises to the cell inner membrane. The enzyme catalyses a quinone + NADH + 5 H(+)(in) = a quinol + NAD(+) + 4 H(+)(out). In terms of biological role, NDH-1 shuttles electrons from NADH, via FMN and iron-sulfur (Fe-S) centers, to quinones in the respiratory chain. The immediate electron acceptor for the enzyme in this species is believed to be ubiquinone. Couples the redox reaction to proton translocation (for every two electrons transferred, four hydrogen ions are translocated across the cytoplasmic membrane), and thus conserves the redox energy in a proton gradient. In Pseudomonas putida (strain W619), this protein is NADH-quinone oxidoreductase subunit K.